A 97-amino-acid chain; its full sequence is MSNISKETVEKVANLAKLEVSEKEATAFAGQLGKIIELVEQLNTLDTNNVEPTSHAIDVSNVLREDVATKGLDRKEVLKNAPDEQDGMFKVPTIMEQ.

Belongs to the GatC family. In terms of assembly, heterotrimer of A, B and C subunits.

The enzyme catalyses L-glutamyl-tRNA(Gln) + L-glutamine + ATP + H2O = L-glutaminyl-tRNA(Gln) + L-glutamate + ADP + phosphate + H(+). It carries out the reaction L-aspartyl-tRNA(Asn) + L-glutamine + ATP + H2O = L-asparaginyl-tRNA(Asn) + L-glutamate + ADP + phosphate + 2 H(+). Its function is as follows. Allows the formation of correctly charged Asn-tRNA(Asn) or Gln-tRNA(Gln) through the transamidation of misacylated Asp-tRNA(Asn) or Glu-tRNA(Gln) in organisms which lack either or both of asparaginyl-tRNA or glutaminyl-tRNA synthetases. The reaction takes place in the presence of glutamine and ATP through an activated phospho-Asp-tRNA(Asn) or phospho-Glu-tRNA(Gln). This chain is Aspartyl/glutamyl-tRNA(Asn/Gln) amidotransferase subunit C, found in Listeria welshimeri serovar 6b (strain ATCC 35897 / DSM 20650 / CCUG 15529 / CIP 8149 / NCTC 11857 / SLCC 5334 / V8).